A 263-amino-acid polypeptide reads, in one-letter code: MFDIGVNLTSSQFSRDHDEVVARARAAGVHGMLLTGTNLPESQQAQRMASHYSGCWSTAGVHPHDGSSWSPAVAEAIYTLAREPQVVAIGECGLDFNRNFSTPQEQEAAFSAQLALAAELAMPVFLHCRDAHDRFLALLKPWLEKIPGAVLHCFTGSRSEVQECLDLGLFIGITGWVCDERRGLELRELLPAIPAERLLLETDAPYLLPRDLKPRPASRRNEPAYLPHILASVASWRGEETQWLEAQTDANVRTLFGIDVNGV.

A divalent metal cation-binding residues include E91, H127, and H152.

The protein belongs to the metallo-dependent hydrolases superfamily. TatD-type hydrolase family. TatD subfamily. In terms of assembly, monomer. Mg(2+) serves as cofactor.

The protein localises to the cytoplasm. 3'-5' exonuclease that prefers single-stranded DNA and RNA. May play a role in the H(2)O(2)-induced DNA damage repair. In Klebsiella pneumoniae (strain 342), this protein is 3'-5' ssDNA/RNA exonuclease TatD.